A 303-amino-acid polypeptide reads, in one-letter code: Hemolysin C (303 aa).

2 CBS domains span residues 81–143 (MVPR…NSPL) and 146–203 (LIRK…IDDE).

The protein belongs to the UPF0053 family. Hemolysin C subfamily.

The polypeptide is Hemolysin C (tlyC) (Rickettsia prowazekii (strain Madrid E)).